We begin with the raw amino-acid sequence, 310 residues long: Ribosomal RNA small subunit methyltransferase H (310 aa).

Residues 32-34, D51, F78, D99, and Q106 each bind S-adenosyl-L-methionine; that span reads AGH.

The protein belongs to the methyltransferase superfamily. RsmH family.

It is found in the cytoplasm. The catalysed reaction is cytidine(1402) in 16S rRNA + S-adenosyl-L-methionine = N(4)-methylcytidine(1402) in 16S rRNA + S-adenosyl-L-homocysteine + H(+). In terms of biological role, specifically methylates the N4 position of cytidine in position 1402 (C1402) of 16S rRNA. The polypeptide is Ribosomal RNA small subunit methyltransferase H (Macrococcus caseolyticus (strain JCSC5402) (Macrococcoides caseolyticum)).